The sequence spans 100 residues: Apolipoprotein C-II (100 aa).

Positions 1 to 25 (MDARSLLLLWLLLPLLLLLGCEVQG) are cleaved as a signal peptide. Positions 65–73 (AVDETIRDI) are lipid binding. The segment at 77 to 100 (GSAAISTYTGILTDQILTMLQGKQ) is lipoprotein lipase cofactor.

Belongs to the apolipoprotein C2 family. Proapolipoprotein C-II is synthesized as a sialic acid containing glycoprotein which is subsequently desialylated prior to its proteolytic processing. In terms of processing, proapolipoprotein C-II, the major form found in plasma undergoes proteolytic cleavage of its N-terminal hexapeptide to generate apolipoprotein C-II, which occurs as the minor form in plasma. As to expression, liver.

Its subcellular location is the secreted. Its function is as follows. Component of chylomicrons, very low-density lipoproteins (VLDL), low-density lipoproteins (LDL), and high-density lipoproteins (HDL) in plasma. Plays an important role in lipoprotein metabolism as an activator of lipoprotein lipase. Both proapolipoprotein C-II and apolipoprotein C-II can activate lipoprotein lipase. This Cavia porcellus (Guinea pig) protein is Apolipoprotein C-II (APOC2).